A 371-amino-acid chain; its full sequence is Enterobactin C-glucosyltransferase (371 aa).

Belongs to the glycosyltransferase 28 family.

The protein localises to the cytoplasm. It catalyses the reaction enterobactin + UDP-alpha-D-glucose = monoglucosyl-enterobactin + UDP. The enzyme catalyses monoglucosyl-enterobactin + UDP-alpha-D-glucose = diglucosyl-enterobactin + UDP + H(+). It carries out the reaction diglucosyl-enterobactin + UDP-alpha-D-glucose = triglucosyl-enterobactin + UDP + H(+). Its pathway is siderophore biosynthesis; enterobactin biosynthesis. Functionally, catalyzes the successive monoglucosylation, diglucosylation and triglucosylation of enterobactin (Ent). Transfers glucosyl groups from uridine-5'-diphosphoglucose (UDP-Glc) to C5 of one, two or three of the 2,3-dihydroxybenzoyl (DHB) units of Ent to yield monoglucosyl-C-Ent (MGE), diglucosyl-C-Ent (DGE) and triglucosyl-C-Ent (TGE). Glucosylation decreases the membrane affinity of Ent and increases the iron acquisition rate. The polypeptide is Enterobactin C-glucosyltransferase (Escherichia coli O6:H1 (strain CFT073 / ATCC 700928 / UPEC)).